Consider the following 1053-residue polypeptide: Protein CLEC16A (1053 aa).

An FPL domain is found at 51–198; the sequence is IRSITEILIW…AVRTITLNVY (148 aa). Disordered stretches follow at residues 375-434, 452-471, and 892-983; these read SLEM…GESE, STSV…AATC, and SSPS…SPSL. Residues 381-392 show a composition bias toward basic residues; that stretch reads HKGKRRVQKRPN. Low complexity predominate over residues 892–938; the sequence is SSPSLSSQSPPSASGSPSGSGSTSHCDSGGTSSSSTPSTAQSPADAP.

Belongs to the CLEC16A/gop-1 family. Interacts with RNF41/NRDP1. In terms of tissue distribution, almost exclusively expressed in immune cells, including dendritic cells, B-lymphocytes and natural killer cells.

It localises to the endosome membrane. It is found in the lysosome membrane. Its function is as follows. Regulator of mitophagy through the upstream regulation of the RNF41/NRDP1-PRKN pathway. Mitophagy is a selective form of autophagy necessary for mitochondrial quality control. The RNF41/NRDP1-PRKN pathway regulates autophagosome-lysosome fusion during late mitophagy. May protect RNF41/NRDP1 from proteasomal degradation, RNF41/NRDP1 which regulates proteasomal degradation of PRKN. Plays a key role in beta cells functions by regulating mitophagy/autophagy and mitochondrial health. The polypeptide is Protein CLEC16A (Homo sapiens (Human)).